The sequence spans 264 residues: 3-methyl-2-oxobutanoate hydroxymethyltransferase (264 aa).

Residues D45 and D84 each coordinate Mg(2+). 3-methyl-2-oxobutanoate is bound by residues 45–46 (DS), D84, and K112. Residue E114 coordinates Mg(2+). The Proton acceptor role is filled by E181.

The protein belongs to the PanB family. In terms of assembly, homodecamer; pentamer of dimers. It depends on Mg(2+) as a cofactor.

The protein resides in the cytoplasm. The catalysed reaction is 3-methyl-2-oxobutanoate + (6R)-5,10-methylene-5,6,7,8-tetrahydrofolate + H2O = 2-dehydropantoate + (6S)-5,6,7,8-tetrahydrofolate. It participates in cofactor biosynthesis; (R)-pantothenate biosynthesis; (R)-pantoate from 3-methyl-2-oxobutanoate: step 1/2. Its function is as follows. Catalyzes the reversible reaction in which hydroxymethyl group from 5,10-methylenetetrahydrofolate is transferred onto alpha-ketoisovalerate to form ketopantoate. In Aliivibrio fischeri (strain MJ11) (Vibrio fischeri), this protein is 3-methyl-2-oxobutanoate hydroxymethyltransferase.